The primary structure comprises 189 residues: Protein shisa-like-2A (189 aa).

The next 2 helical transmembrane spans lie at 48 to 68 (SFFPYEHNYMWWLSIGALVGL) and 70 to 90 (TAAVVLLAFLITACVLCYLFI). The interval 98–189 (LDPGLSLQTT…PTPGPHGPVP (92 aa)) is disordered. The span at 140–171 (NTHLESNKKQTVSPTCLPQNQFMATVTASNIP) shows a compositional bias: polar residues.

Belongs to the shisa family.

It localises to the membrane. The sequence is that of Protein shisa-like-2A (Shisal2a) from Mus musculus (Mouse).